The chain runs to 775 residues: Glutamine--tRNA ligase (775 aa).

Residue A2 is modified to N-acetylalanine. At S70 the chain carries Phosphoserine. The short motif at 270-280 is the 'HIGH' region element; it reads PEPNGILHIGH. ATP-binding positions include 271–273 and 277–283; these read EPN and HIGHAKA. An L-glutamine-binding site is contributed by D303. Residue K309 is modified to N6-acetyllysine. Y438 provides a ligand contact to L-glutamine. ATP-binding positions include T457, 486–487, and 494–496; these read RL and VSK. The 'KMSKS' region signature appears at 493 to 497; that stretch reads VVSKR. Phosphoserine is present on S495.

It belongs to the class-I aminoacyl-tRNA synthetase family. Monomer. Part of a multisubunit complex that groups tRNA ligases for Arg (RARS1), Asp (DARS1), Gln (QARS1), Ile (IARS1), Leu (LARS1), Lys (KARS1), Met (MARS1) the bifunctional ligase for Glu and Pro (EPRS1) and the auxiliary subunits AIMP1/p43, AIMP2/p38 and EEF1E1/p18. Interacts with RARS1. Part of a complex composed of RARS1, QARS1 and AIMP1.

Its subcellular location is the cytoplasm. It is found in the cytosol. It catalyses the reaction tRNA(Gln) + L-glutamine + ATP = L-glutaminyl-tRNA(Gln) + AMP + diphosphate. Glutamine--tRNA ligase. Plays a critical role in brain development. The chain is Glutamine--tRNA ligase (QARS1) from Bos taurus (Bovine).